Consider the following 257-residue polypeptide: A-factor type gamma-butyrolactone 1'-reductase (1S-forming) (257 aa).

The active-site Proton acceptor is Tyr161.

This sequence belongs to the short-chain dehydrogenases/reductases (SDR) family. As to quaternary structure, homodimer.

The enzyme catalyses a (3R,4R)-3-[(1S)-1-hydroxyalkyl]-4-(hydroxymethyl)oxolan-2-one + NADP(+) = a (3R,4R)-3-alkanoyl-4-(hydroxymethyl)oxolan-2-one + NADPH + H(+). In terms of biological role, involved in the biosynthesis of virginiae butanolide (VB), which regulates the production of antibiotic virginiamycin. Catalyzes the reduction of 6-dehydro-VB-A to VB-A, the last catalytic step in VB biosynthesis. In vitro, can use various synthetic A-factor-type analogs. In Streptomyces virginiae (Streptomyces cinnamonensis), this protein is A-factor type gamma-butyrolactone 1'-reductase (1S-forming).